The primary structure comprises 29 residues: Cytochrome b6-f complex subunit 8 (29 aa).

Residues 3–23 form a helical membrane-spanning segment; sequence IVNIAWAALMVVSTFSLTLVV.

It belongs to the PetN family. As to quaternary structure, the 4 large subunits of the cytochrome b6-f complex are cytochrome b6, subunit IV (17 kDa polypeptide, PetD), cytochrome f and the Rieske protein, while the 4 small subunits are PetG, PetL, PetM and PetN. The complex functions as a dimer.

Its subcellular location is the plastid. The protein resides in the chloroplast thylakoid membrane. Component of the cytochrome b6-f complex, which mediates electron transfer between photosystem II (PSII) and photosystem I (PSI), cyclic electron flow around PSI, and state transitions. The polypeptide is Cytochrome b6-f complex subunit 8 (Huperzia lucidula (Shining clubmoss)).